A 196-amino-acid chain; its full sequence is DnaA initiator-associating protein DiaA (196 aa).

The 163-residue stretch at L34–E196 folds into the SIS domain.

This sequence belongs to the SIS family. DiaA subfamily. In terms of assembly, homotetramer; dimer of dimers.

Required for the timely initiation of chromosomal replication via direct interactions with the DnaA initiator protein. The chain is DnaA initiator-associating protein DiaA from Serratia proteamaculans (strain 568).